Here is a 270-residue protein sequence, read N- to C-terminus: 4-hydroxy-tetrahydrodipicolinate reductase (270 aa).

NAD(+) is bound by residues 9–14 (GSGGRM) and Glu35. Arg36 provides a ligand contact to NADP(+). Residues 99 to 101 (GTT) and 123 to 126 (ASNY) contribute to the NAD(+) site. The Proton donor/acceptor role is filled by His156. His157 contributes to the (S)-2,3,4,5-tetrahydrodipicolinate binding site. The Proton donor role is filled by Lys160. A (S)-2,3,4,5-tetrahydrodipicolinate-binding site is contributed by 166-167 (GT).

This sequence belongs to the DapB family.

The protein resides in the cytoplasm. It carries out the reaction (S)-2,3,4,5-tetrahydrodipicolinate + NAD(+) + H2O = (2S,4S)-4-hydroxy-2,3,4,5-tetrahydrodipicolinate + NADH + H(+). The enzyme catalyses (S)-2,3,4,5-tetrahydrodipicolinate + NADP(+) + H2O = (2S,4S)-4-hydroxy-2,3,4,5-tetrahydrodipicolinate + NADPH + H(+). The protein operates within amino-acid biosynthesis; L-lysine biosynthesis via DAP pathway; (S)-tetrahydrodipicolinate from L-aspartate: step 4/4. Catalyzes the conversion of 4-hydroxy-tetrahydrodipicolinate (HTPA) to tetrahydrodipicolinate. The polypeptide is 4-hydroxy-tetrahydrodipicolinate reductase (Histophilus somni (strain 2336) (Haemophilus somnus)).